A 352-amino-acid chain; its full sequence is Holliday junction branch migration complex subunit RuvB (352 aa).

The large ATPase domain (RuvB-L) stretch occupies residues 13–201 (IPRSRKELRL…FGLCHKIEFY (189 aa)). Residues L37, R41, G82, K85, T86, T87, 148–150 (EDF), R191, Y201, and R238 contribute to the ATP site. T86 contacts Mg(2+). Residues 202–273 (SNDELKQIIF…IIEKALDSQK (72 aa)) form a small ATPAse domain (RuvB-S) region. Positions 276-352 (NRGLDNVDRK…KYISSNNEKY (77 aa)) are head domain (RuvB-H). 2 residues coordinate DNA: R330 and R335.

It belongs to the RuvB family. As to quaternary structure, homohexamer. Forms an RuvA(8)-RuvB(12)-Holliday junction (HJ) complex. HJ DNA is sandwiched between 2 RuvA tetramers; dsDNA enters through RuvA and exits via RuvB. An RuvB hexamer assembles on each DNA strand where it exits the tetramer. Each RuvB hexamer is contacted by two RuvA subunits (via domain III) on 2 adjacent RuvB subunits; this complex drives branch migration. In the full resolvosome a probable DNA-RuvA(4)-RuvB(12)-RuvC(2) complex forms which resolves the HJ.

The protein localises to the cytoplasm. It catalyses the reaction ATP + H2O = ADP + phosphate + H(+). The RuvA-RuvB-RuvC complex processes Holliday junction (HJ) DNA during genetic recombination and DNA repair, while the RuvA-RuvB complex plays an important role in the rescue of blocked DNA replication forks via replication fork reversal (RFR). RuvA specifically binds to HJ cruciform DNA, conferring on it an open structure. The RuvB hexamer acts as an ATP-dependent pump, pulling dsDNA into and through the RuvAB complex. RuvB forms 2 homohexamers on either side of HJ DNA bound by 1 or 2 RuvA tetramers; 4 subunits per hexamer contact DNA at a time. Coordinated motions by a converter formed by DNA-disengaged RuvB subunits stimulates ATP hydrolysis and nucleotide exchange. Immobilization of the converter enables RuvB to convert the ATP-contained energy into a lever motion, pulling 2 nucleotides of DNA out of the RuvA tetramer per ATP hydrolyzed, thus driving DNA branch migration. The RuvB motors rotate together with the DNA substrate, which together with the progressing nucleotide cycle form the mechanistic basis for DNA recombination by continuous HJ branch migration. Branch migration allows RuvC to scan DNA until it finds its consensus sequence, where it cleaves and resolves cruciform DNA. The chain is Holliday junction branch migration complex subunit RuvB from Prochlorococcus marinus (strain MIT 9515).